Here is a 299-residue protein sequence, read N- to C-terminus: NADH-cytochrome b5 reductase 2 (299 aa).

The helical transmembrane segment at 13–35 threads the bilayer; it reads SFKVLAPFAAAVGSVGIAYQYST. Residues 50–154 form the FAD-binding FR-type domain; that stretch reads DEWIDLKLAK…KGPVVKWKWE (105 aa). 157 to 192 contacts FAD; sequence QYKSIALIGGGTGITPLYQLMHEITKNPEDKTKVNL.

This sequence belongs to the flavoprotein pyridine nucleotide cytochrome reductase family. Requires FAD as cofactor.

It is found in the mitochondrion outer membrane. The catalysed reaction is 2 Fe(III)-[cytochrome b5] + NADH = 2 Fe(II)-[cytochrome b5] + NAD(+) + H(+). May mediate the reduction of outer membrane cytochrome b5. This Debaryomyces hansenii (strain ATCC 36239 / CBS 767 / BCRC 21394 / JCM 1990 / NBRC 0083 / IGC 2968) (Yeast) protein is NADH-cytochrome b5 reductase 2 (MCR1).